The chain runs to 582 residues: Actin-histidine N-methyltransferase (582 aa).

S-adenosyl-L-methionine-binding positions include arginine 75, 104 to 106, arginine 254, 275 to 279, and 325 to 327; these read EGF, DMCNH, and NGF. The 221-residue stretch at 94–314 folds into the SET domain; sequence DGFELVEFPE…SGEQIYIFYG (221 aa). Positions 550 to 582 are disordered; that stretch reads DKDLLPNGTKSENDSFLAEDNQQETGNAKDFCS.

Belongs to the class V-like SAM-binding methyltransferase superfamily. SETD3 actin-histidine methyltransferase family.

The protein localises to the cytoplasm. The catalysed reaction is L-histidyl-[protein] + S-adenosyl-L-methionine = N(tele)-methyl-L-histidyl-[protein] + S-adenosyl-L-homocysteine + H(+). Its function is as follows. Protein-histidine N-methyltransferase that specifically mediates 3-methylhistidine (tele-methylhistidine) methylation of actin at 'His-73'. Does not have protein-lysine N-methyltransferase activity and probably only catalyzes histidine methylation of actin. This is Actin-histidine N-methyltransferase from Xenopus tropicalis (Western clawed frog).